The primary structure comprises 426 residues: Glutamate-1-semialdehyde 2,1-aminomutase (426 aa).

K265 carries the post-translational modification N6-(pyridoxal phosphate)lysine.

The protein belongs to the class-III pyridoxal-phosphate-dependent aminotransferase family. HemL subfamily. As to quaternary structure, homodimer. Requires pyridoxal 5'-phosphate as cofactor.

The protein resides in the cytoplasm. The catalysed reaction is (S)-4-amino-5-oxopentanoate = 5-aminolevulinate. It participates in porphyrin-containing compound metabolism; protoporphyrin-IX biosynthesis; 5-aminolevulinate from L-glutamyl-tRNA(Glu): step 2/2. The protein is Glutamate-1-semialdehyde 2,1-aminomutase of Paraburkholderia phymatum (strain DSM 17167 / CIP 108236 / LMG 21445 / STM815) (Burkholderia phymatum).